Reading from the N-terminus, the 501-residue chain is Ribose import ATP-binding protein RbsA (501 aa).

ABC transporter domains follow at residues 8 to 245 and 255 to 500; these read LKMV…VGRT and VKKG…VGIN. Residue 40-47 participates in ATP binding; the sequence is GENGAGKS.

It belongs to the ABC transporter superfamily. Ribose importer (TC 3.A.1.2.1) family. As to quaternary structure, the complex is composed of an ATP-binding protein (RbsA), two transmembrane proteins (RbsC) and a solute-binding protein (RbsB).

Its subcellular location is the cell membrane. It carries out the reaction D-ribose(out) + ATP + H2O = D-ribose(in) + ADP + phosphate + H(+). In terms of biological role, part of the ABC transporter complex RbsABC involved in ribose import. Responsible for energy coupling to the transport system. The chain is Ribose import ATP-binding protein RbsA from Clostridium perfringens (strain 13 / Type A).